Consider the following 495-residue polypeptide: ATP synthase subunit beta, chloroplastic (495 aa).

Position 172-179 (172-179 (GGAGVGKT)) interacts with ATP.

This sequence belongs to the ATPase alpha/beta chains family. In terms of assembly, F-type ATPases have 2 components, CF(1) - the catalytic core - and CF(0) - the membrane proton channel. CF(1) has five subunits: alpha(3), beta(3), gamma(1), delta(1), epsilon(1). CF(0) has four main subunits: a(1), b(1), b'(1) and c(9-12).

It localises to the plastid. The protein localises to the chloroplast thylakoid membrane. It catalyses the reaction ATP + H2O + 4 H(+)(in) = ADP + phosphate + 5 H(+)(out). Its function is as follows. Produces ATP from ADP in the presence of a proton gradient across the membrane. The catalytic sites are hosted primarily by the beta subunits. This Hyacinthus orientalis (Common hyacinth) protein is ATP synthase subunit beta, chloroplastic.